Here is a 796-residue protein sequence, read N- to C-terminus: Probable phosphoketolase 2 (796 aa).

The protein belongs to the XFP family. Thiamine diphosphate serves as cofactor.

This chain is Probable phosphoketolase 2, found in Lactiplantibacillus plantarum (strain ATCC BAA-793 / NCIMB 8826 / WCFS1) (Lactobacillus plantarum).